Reading from the N-terminus, the 389-residue chain is Spore coat polysaccharide biosynthesis protein SpsC (389 aa).

Lys187 bears the N6-(pyridoxal phosphate)lysine mark.

Belongs to the DegT/DnrJ/EryC1 family. Requires pyridoxal 5'-phosphate as cofactor.

Its pathway is spore coat biogenesis; spore coat polysaccharide biosynthesis. This is Spore coat polysaccharide biosynthesis protein SpsC (spsC) from Bacillus subtilis (strain 168).